The sequence spans 394 residues: GDP-mannose transporter (394 aa).

Residues 1–55 (MADKKNEDFVVRMPDNGTVEKEPFLARSPPARARTGSGGGFGDSFSLARVANNPP) are Cytoplasmic-facing. Residues 56–76 (AAILAYCLSSISMTVVNKYVV) form a helical membrane-spanning segment. Residues 77 to 80 (SGSE) lie on the Lumenal side of the membrane. Residues 81 to 101 (WNLNFFYLAVQAIVCIIAILF) traverse the membrane as a helical segment. Topologically, residues 102–121 (CKQIGIITNLAPFDNVKAKK) are cytoplasmic. The chain crosses the membrane as a helical span at residues 122-144 (WFPVSLLLVGMIYTSTKALQFLS). At 145–149 (VPVYT) the chain is on the lumenal side. The helical transmembrane segment at 150-167 (IFKNLTIIAIAYGEVLWF) threads the bilayer. Over 168–173 (GGSVSP) the chain is Cytoplasmic. A helical transmembrane segment spans residues 174–198 (LALVSFGLMVLSSVVAAWADIQSAI). The Lumenal portion of the chain corresponds to 199–213 (HGGSHPSEASTAIST). The chain crosses the membrane as a helical span at residues 214 to 234 (LNAGYAWMGMNVFCSAAYLLG). Over 235–246 (MRKVIHKMNFKD) the chain is Cytoplasmic. Residues 247 to 267 (WDSMFYNNLLTIPVLIVCSLI) traverse the membrane as a helical segment. The Lumenal segment spans residues 268 to 287 (AEDWSAANLARNFPIESRNA). Residues 288 to 308 (LFIGMIYSGLGAIFISYCSAW) form a helical membrane-spanning segment. Over 309 to 316 (CIRVTTST) the chain is Cytoplasmic. Residues 317-339 (TYSMVGALNKLPIAISGLVFFSA) traverse the membrane as a helical segment. Residues 340-342 (PVT) are Lumenal-facing. A helical transmembrane segment spans residues 343 to 362 (FGSVSAIVIGFISGIVYAWA). Topologically, residues 363 to 394 (KARQSSQAKSALPTQQPVMSASSQSNKDASNS) are cytoplasmic. The tract at residues 371-394 (KSALPTQQPVMSASSQSNKDASNS) is disordered. The segment covering 374–394 (LPTQQPVMSASSQSNKDASNS) has biased composition (polar residues).

It belongs to the TPT transporter family. SLC35D subfamily. Homooligomer.

The protein resides in the golgi apparatus membrane. It is found in the cytoplasmic vesicle membrane. The protein localises to the endoplasmic reticulum membrane. In terms of biological role, involved in the import of GDP-mannose from the cytoplasm into the Golgi lumen. This is GDP-mannose transporter (VRG4) from Pyricularia oryzae (strain 70-15 / ATCC MYA-4617 / FGSC 8958) (Rice blast fungus).